The chain runs to 504 residues: Cytochrome P450 4A25 (504 aa).

Transmembrane regions (helical) follow at residues 6 to 26 (LASASGLLQVASLLGLLLLLL) and 110 to 130 (APVLYRLLIPWIGCGLLLLNG). Cys-451 is a binding site for heme.

It belongs to the cytochrome P450 family. The cofactor is heme.

Its subcellular location is the endoplasmic reticulum membrane. The catalysed reaction is an omega-methyl-long-chain fatty acid + reduced [NADPH--hemoprotein reductase] + O2 = an omega-hydroxy-long-chain fatty acid + oxidized [NADPH--hemoprotein reductase] + H2O + H(+). Catalyzes the omega- and (omega-1)-hydroxylation of various fatty acids such as laurate and palmitate. Has no activity toward taurochenodeoxycholic acid. In Sus scrofa (Pig), this protein is Cytochrome P450 4A25 (CYP4A25).